A 511-amino-acid polypeptide reads, in one-letter code: Spermatogenesis-associated protein 2 (511 aa).

One can recognise a PUB domain in the interval 77 to 149; it reads ALHCAFSMLE…AYKLKELVES (73 aa). Positions 320 to 337 match the PIM motif motif; it reads TYFPTQDDVDLYTDSEPR.

It belongs to the SPATA2 family. In terms of assembly, interacts (via the PIM motif) with RNF31/HOIP (via the PUB domain); the interaction is direct. Interacts (via the PUB domain) with CYLD; the interaction is direct. Expressed in the testis and to a lesser extent in the brain, while skeletal muscle and kidney show weak expression.

Its subcellular location is the cytoplasm. The protein resides in the nucleus. In terms of biological role, bridging factor that mediates the recruitment of CYLD to the LUBAC complex, thereby regulating TNF-alpha-induced necroptosis. Acts as a direct binding intermediate that bridges RNF31/HOIP, the catalytic subunit of the LUBAC complex, and the deubiquitinase (CYLD), thereby recruiting CYLD to the TNF-R1 signaling complex (TNF-RSC). Required to activate the 'Met-1'- (linear) and 'Lys-63'-linked deubiquitinase activities of CYLD. Controls the kinase activity of RIPK1 and TNF-alpha-induced necroptosis by promoting 'Met-1'-linked deubiquitination of RIPK1 by CYLD. The sequence is that of Spermatogenesis-associated protein 2 from Rattus norvegicus (Rat).